The following is a 566-amino-acid chain: Urease subunit alpha (566 aa).

The Urease domain maps to 128 to 566 (GGVDTHIHFI…LPMAQRYFLF (439 aa)). 3 residues coordinate Ni(2+): His-133, His-135, and Lys-216. Position 216 is an N6-carboxylysine (Lys-216). His-218 lines the substrate pocket. Ni(2+)-binding residues include His-245 and His-271. His-319 functions as the Proton donor in the catalytic mechanism. Asp-359 serves as a coordination point for Ni(2+).

Belongs to the metallo-dependent hydrolases superfamily. Urease alpha subunit family. In terms of assembly, may form a heterohexamer of 3 UreC (alpha) and 3 UreAB (gamma/beta) subunits. May also form a heterotrimer of UreA (gamma), UreB (beta) and UreC (alpha) subunits. Three heterotrimers associate to form the active enzyme. Ni cation serves as cofactor. Carboxylation allows a single lysine to coordinate two nickel ions.

Its subcellular location is the cytoplasm. It carries out the reaction urea + 2 H2O + H(+) = hydrogencarbonate + 2 NH4(+). The protein operates within nitrogen metabolism; urea degradation; CO(2) and NH(3) from urea (urease route): step 1/1. The sequence is that of Urease subunit alpha from Pseudomonas savastanoi pv. phaseolicola (strain 1448A / Race 6) (Pseudomonas syringae pv. phaseolicola (strain 1448A / Race 6)).